Here is a 154-residue protein sequence, read N- to C-terminus: Transcriptional repressor NrdR (154 aa).

Residues 3–34 (CPFCSHNDSKVIDSRPTDEGQAIRRRRECISC) fold into a zinc finger. One can recognise an ATP-cone domain in the interval 49–139 (LIVVKKNGNR…VYREFKDINT (91 aa)).

This sequence belongs to the NrdR family. The cofactor is Zn(2+).

Functionally, negatively regulates transcription of bacterial ribonucleotide reductase nrd genes and operons by binding to NrdR-boxes. The protein is Transcriptional repressor NrdR of Alkaliphilus oremlandii (strain OhILAs) (Clostridium oremlandii (strain OhILAs)).